The following is a 216-amino-acid chain: Large ribosomal subunit protein uL3 (216 aa).

This sequence belongs to the universal ribosomal protein uL3 family. Part of the 50S ribosomal subunit. Forms a cluster with proteins L14 and L19.

Its function is as follows. One of the primary rRNA binding proteins, it binds directly near the 3'-end of the 23S rRNA, where it nucleates assembly of the 50S subunit. The sequence is that of Large ribosomal subunit protein uL3 from Symbiobacterium thermophilum (strain DSM 24528 / JCM 14929 / IAM 14863 / T).